The primary structure comprises 145 residues: Bacilliredoxin Acid345_1880 (145 aa).

The protein belongs to the bacilliredoxin family.

This is Bacilliredoxin Acid345_1880 from Koribacter versatilis (strain Ellin345).